The sequence spans 386 residues: Manganese dependent endoglucanase Eg5A (386 aa).

An N-terminal signal peptide occupies residues 1–17; it reads MLKYASIALALATLGVA. The region spanning 18 to 53 is the CBM1 domain; that stretch reads QQQQWGQCGGIGWTGATTCVAGSVCSVLNPYYSQCI. Glu-209 acts as the Proton donor in catalysis. Catalysis depends on Glu-319, which acts as the Nucleophile. An N-linked (GlcNAc...) asparagine glycan is attached at Asn-324.

It belongs to the glycosyl hydrolase 5 (cellulase A) family. Requires Mn(2+) as cofactor.

The protein resides in the secreted. The enzyme catalyses Endohydrolysis of (1-&gt;4)-beta-D-glucosidic linkages in cellulose, lichenin and cereal beta-D-glucans.. In terms of biological role, secreted manganese dependent endoglucanase that acts by cleaving the beta-1,4-glucose linkage. Exhibits high activity toward carboxymethyl-cellulose (CMC), barley glucan, and glucomannan. Displays low activity on larminarin and xyloglucan but does not hydrolyze hemicellulose substrates such as birchwood xylan, arabinoxylan, and arabinan. The polypeptide is Manganese dependent endoglucanase Eg5A (Phanerodontia chrysosporium (White-rot fungus)).